The sequence spans 785 residues: MYKSLFFFLKIFAILILLGCSVTAYIIYHYSHDLPDYSQLVRYYPPSVTRIYSRDGKLMEEYAFERRVFVPINNVPSSLIESFIAAEDKNFYNHPGIDLLGIVRAAFLNISNYLHNRRMEGASTITQQVVKNFLLTNEVSLERKIKEVIISYMISRVFTKHQILELYLNQTFFGRGAYGVAAAAQNYFNKSIEELTIAESAFIAALPKAPSELNPDKNYSRVKARRDYVIERMFEDGYITRDTMKEAIGSPIVLRKRAKEETVTADYYAAQVREEVIKMLNSKEEFYRGGLTIITSLDAQMQKLAENALRKGLREFDRRHGFRKPIANIPLDHWQEALKNIPTPSSLLEYKLAVVLDVSDNHAKIGLIDGSKARIPIIEMQWARSNLKSVKTLLKKGDVIVVEPIKDCYALRQIPEINGAIMVMNPHTGQVLASVGGYDFSTSKFDRVTQALRQPGSLTKTFVYLAALENGVKPNQIFNDGPIEIMQGPGMPSWRPKNYEGQFLGEMTMRTGFEKSRNLITVRVATAVGLTKIVDIIKRFGINNEPKKVYSMVLGSIETTLSRITNAYAIIANGGKKVEPHFIELIKDRNGKIIYRRDNRECFSCNILDSDLDTAILEIPKEDIYRVTDEASDYQITSFLTGAIDSGTGYAARKLGKIIAGKTGTSNDSKDTWFIGFTPKIVVGSYVGYDTPKELGKKATGSNVVLPIFIDFMNHAYKDEPSLPFKVPDSIKLIAVDRITGKMIPDGTVIEAFKVNNIQMLENDYMIDNHDIFIPGISDQSQEIY.

At 1 to 6 (MYKSLF) the chain is on the cytoplasmic side. Residues 7–27 (FFLKIFAILILLGCSVTAYII) form a helical; Signal-anchor for type II membrane protein membrane-spanning segment. The Periplasmic segment spans residues 28–785 (YHYSHDLPDY…GISDQSQEIY (758 aa)). The segment at 49 to 220 (TRIYSRDGKL…SELNPDKNYS (172 aa)) is transglycosylase. The Proton donor; for transglycosylase activity role is filled by Glu87. The segment at 398 to 711 (DVIVVEPIKD…SNVVLPIFID (314 aa)) is transpeptidase. The Acyl-ester intermediate; for transpeptidase activity role is filled by Ser457.

This sequence in the N-terminal section; belongs to the glycosyltransferase 51 family. The protein in the C-terminal section; belongs to the transpeptidase family.

The protein resides in the cell inner membrane. It carries out the reaction [GlcNAc-(1-&gt;4)-Mur2Ac(oyl-L-Ala-gamma-D-Glu-L-Lys-D-Ala-D-Ala)](n)-di-trans,octa-cis-undecaprenyl diphosphate + beta-D-GlcNAc-(1-&gt;4)-Mur2Ac(oyl-L-Ala-gamma-D-Glu-L-Lys-D-Ala-D-Ala)-di-trans,octa-cis-undecaprenyl diphosphate = [GlcNAc-(1-&gt;4)-Mur2Ac(oyl-L-Ala-gamma-D-Glu-L-Lys-D-Ala-D-Ala)](n+1)-di-trans,octa-cis-undecaprenyl diphosphate + di-trans,octa-cis-undecaprenyl diphosphate + H(+). The enzyme catalyses Preferential cleavage: (Ac)2-L-Lys-D-Ala-|-D-Ala. Also transpeptidation of peptidyl-alanyl moieties that are N-acyl substituents of D-alanine.. It participates in cell wall biogenesis; peptidoglycan biosynthesis. In terms of biological role, cell wall formation. Synthesis of cross-linked peptidoglycan from the lipid intermediates. The enzyme has a penicillin-insensitive transglycosylase N-terminal domain (formation of linear glycan strands) and a penicillin-sensitive transpeptidase C-terminal domain (cross-linking of the peptide subunits). This is Penicillin-binding protein 1A (mrcA) from Rickettsia typhi (strain ATCC VR-144 / Wilmington).